We begin with the raw amino-acid sequence, 180 residues long: Signal peptidase complex subunit 2 (180 aa).

Residues 1–45 (MTDEPVKVVNKWDGPTVKNALDEVVKKILNDKVGWTESHNLMNLR) are Cytoplasmic-facing. The helical transmembrane segment at 46–66 (LLISFIGVAFSAFACGYDYYE) threads the bilayer. Residues 67–72 (PFPKSK) lie on the Lumenal side of the membrane. Residues 73–93 (IVLAVCSVSYFICMGILQMYQ) form a helical membrane-spanning segment. Over 94 to 180 (WYVEKDCIYE…LYNRLIRSEQ (87 aa)) the chain is Cytoplasmic.

It belongs to the SPCS2 family. Component of the signal peptidase complex (SPC) composed of a catalytic subunit sec-11 and three accessory subunits spcs-1, spcs-2 and spcs-3. The complex induces a local thinning of the ER membrane which is used to measure the length of the signal peptide (SP) h-region of protein substrates. This ensures the selectivity of the complex towards h-regions shorter than 18-20 amino acids.

It is found in the endoplasmic reticulum membrane. In terms of biological role, component of the signal peptidase complex (SPC) which catalyzes the cleavage of N-terminal signal sequences from nascent proteins as they are translocated into the lumen of the endoplasmic reticulum. Enhances the enzymatic activity of SPC and facilitates the interactions between different components of the translocation site. This chain is Signal peptidase complex subunit 2, found in Caenorhabditis elegans.